A 475-amino-acid chain; its full sequence is tRNA (guanine(37)-N(1))-methyltransferase (475 aa).

S-adenosyl-L-methionine is bound by residues histidine 219, 258-259 (DL), and 286-287 (DG). A disordered region spans residues 306-328 (KITKQKPTSNDKKRNRKVESPTV). Residue asparagine 349 coordinates S-adenosyl-L-methionine. A compositionally biased stretch (polar residues) spans 456 to 469 (NLVSQSDVSKSSDN). Residues 456-475 (NLVSQSDVSKSSDNILEKDT) are disordered.

The protein belongs to the class I-like SAM-binding methyltransferase superfamily. TRM5/TYW2 family. Monomer.

It localises to the mitochondrion matrix. The protein resides in the nucleus. It is found in the cytoplasm. The catalysed reaction is guanosine(37) in tRNA + S-adenosyl-L-methionine = N(1)-methylguanosine(37) in tRNA + S-adenosyl-L-homocysteine + H(+). Specifically methylates the N1 position of guanosine-37 in various cytoplasmic and mitochondrial tRNAs. Methylation is not dependent on the nature of the nucleoside 5' of the target nucleoside. This is the first step in the biosynthesis of wybutosine (yW), a modified base adjacent to the anticodon of tRNAs and required for accurate decoding. This chain is tRNA (guanine(37)-N(1))-methyltransferase, found in Batrachochytrium dendrobatidis (strain JAM81 / FGSC 10211) (Frog chytrid fungus).